A 152-amino-acid polypeptide reads, in one-letter code: uncharacterized protein (152 aa).

3 helical membrane-spanning segments follow: residues 15–35 (IINV…IYDI), 43–63 (LVVA…LILT), and 117–137 (TFLL…KLLI).

It to M.jannaschii MJ0129 and MJ0587.

The protein localises to the cell membrane. This is an uncharacterized protein from Methanocaldococcus jannaschii (strain ATCC 43067 / DSM 2661 / JAL-1 / JCM 10045 / NBRC 100440) (Methanococcus jannaschii).